The chain runs to 360 residues: Isocitrate dehydrogenase [NAD] subunit 1, mitochondrial (360 aa).

The N-terminal 11 residues, 1–11 (MLNRTIAKRTL), are a transit peptide targeting the mitochondrion. Substrate contacts are provided by arginine 109, arginine 140, and aspartate 228. Mg(2+) is bound at residue aspartate 228.

The protein belongs to the isocitrate and isopropylmalate dehydrogenases family. In terms of assembly, octamer of two non-identical subunits IDH1 and IDH2. The cofactor is Mg(2+). Requires Mn(2+) as cofactor.

The protein resides in the mitochondrion. The catalysed reaction is D-threo-isocitrate + NAD(+) = 2-oxoglutarate + CO2 + NADH. With respect to regulation, allosterically regulated by several compounds including AMP, NAD(+), and citrate. Functionally, performs an essential role in the oxidative function of the citric acid cycle. Also binds RNA; specifically to the 5'-untranslated leaders of mitochondrial mRNAs. This chain is Isocitrate dehydrogenase [NAD] subunit 1, mitochondrial (IDH1), found in Saccharomyces cerevisiae (strain ATCC 204508 / S288c) (Baker's yeast).